An 89-amino-acid polypeptide reads, in one-letter code: NADH-ubiquinone oxidoreductase chain 4L (89 aa).

3 consecutive transmembrane segments (helical) span residues 1–21, 22–42, and 57–77; these read MNITLILFLIGILGFVLNRKN, IILMLISIEIMLLAITFLILV, and IYIIVVAGAESAIGLAILVAF.

This sequence belongs to the complex I subunit 4L family.

Its subcellular location is the mitochondrion membrane. It catalyses the reaction a ubiquinone + NADH + 5 H(+)(in) = a ubiquinol + NAD(+) + 4 H(+)(out). Core subunit of the mitochondrial membrane respiratory chain NADH dehydrogenase (Complex I) that is believed to belong to the minimal assembly required for catalysis. Complex I functions in the transfer of electrons from NADH to the respiratory chain. The immediate electron acceptor for the enzyme is believed to be ubiquinone. The protein is NADH-ubiquinone oxidoreductase chain 4L (ndh-4L) of Neurospora crassa (strain ATCC 24698 / 74-OR23-1A / CBS 708.71 / DSM 1257 / FGSC 987).